Consider the following 489-residue polypeptide: GTPase Der (489 aa).

EngA-type G domains follow at residues 3–166 (PVVA…AEAM) and 200–373 (IKLA…ESAT). GTP is bound by residues 9-16 (GRPNVGKS), 56-60 (DTGGI), 118-121 (NKVD), 206-213 (GKPNVGKS), 253-257 (DTAGV), and 318-321 (NKWD). One can recognise a KH-like domain in the interval 374–458 (RRVSTSMLTR…PIQVRFQEGG (85 aa)).

The protein belongs to the TRAFAC class TrmE-Era-EngA-EngB-Septin-like GTPase superfamily. EngA (Der) GTPase family. As to quaternary structure, associates with the 50S ribosomal subunit.

Its function is as follows. GTPase that plays an essential role in the late steps of ribosome biogenesis. The sequence is that of GTPase Der from Shewanella loihica (strain ATCC BAA-1088 / PV-4).